Here is a 698-residue protein sequence, read N- to C-terminus: Polyribonucleotide nucleotidyltransferase (698 aa).

2 residues coordinate Mg(2+): D487 and D493. One can recognise a KH domain in the interval 555 to 614 (PKIIQIQIDPQKIGDVVGQRGKTINAIIEQTGVKIDINDEGAVSVCGTDKDMMDKAINMI). In terms of domain architecture, S1 motif spans 624–692 (GQVFEGKVIS…KMGRISFSIK (69 aa)).

Belongs to the polyribonucleotide nucleotidyltransferase family. It depends on Mg(2+) as a cofactor.

It is found in the cytoplasm. It catalyses the reaction RNA(n+1) + phosphate = RNA(n) + a ribonucleoside 5'-diphosphate. Functionally, involved in mRNA degradation. Catalyzes the phosphorolysis of single-stranded polyribonucleotides processively in the 3'- to 5'-direction. This chain is Polyribonucleotide nucleotidyltransferase, found in Lachnoclostridium phytofermentans (strain ATCC 700394 / DSM 18823 / ISDg) (Clostridium phytofermentans).